Reading from the N-terminus, the 324-residue chain is 33 kDa ribonucleoprotein, chloroplastic (324 aa).

Residues 1–71 (MSGCCFSFAA…YRSSIFLSTC (71 aa)) constitute a chloroplast transit peptide. 2 consecutive RRM domains span residues 114–192 (GRLY…FPEV) and 217–296 (HKLY…AGQK). The disordered stretch occupies residues 294 to 324 (GQKAPVSSPPVVETSPENDSDNSELLSSLSS). Residues 298–308 (PVSSPPVVETS) are compositionally biased toward low complexity.

The protein localises to the plastid. The protein resides in the chloroplast. Functionally, could be involved in splicing and/or processing of chloroplast RNA's. In Nicotiana sylvestris (Wood tobacco), this protein is 33 kDa ribonucleoprotein, chloroplastic.